A 259-amino-acid chain; its full sequence is Type III pantothenate kinase (259 aa).

Residue aspartate 6–threonine 13 coordinates ATP. Glycine 113 to arginine 116 provides a ligand contact to substrate. The Proton acceptor role is filled by aspartate 115. Residue aspartate 135 participates in K(+) binding. Threonine 138 lines the ATP pocket. Residue threonine 190 participates in substrate binding.

It belongs to the type III pantothenate kinase family. In terms of assembly, homodimer. It depends on NH4(+) as a cofactor. K(+) is required as a cofactor.

The protein localises to the cytoplasm. The catalysed reaction is (R)-pantothenate + ATP = (R)-4'-phosphopantothenate + ADP + H(+). It participates in cofactor biosynthesis; coenzyme A biosynthesis; CoA from (R)-pantothenate: step 1/5. In terms of biological role, catalyzes the phosphorylation of pantothenate (Pan), the first step in CoA biosynthesis. The sequence is that of Type III pantothenate kinase from Endomicrobium trichonymphae.